Here is a 960-residue protein sequence, read N- to C-terminus: Leucine--tRNA ligase (960 aa).

The 'HIGH' region signature appears at 71 to 82 (PYPSGAGLHVGH). Positions 729–733 (KMGKS) match the 'KMSKS' region motif. Residue Lys732 participates in ATP binding.

It belongs to the class-I aminoacyl-tRNA synthetase family.

It localises to the cytoplasm. It catalyses the reaction tRNA(Leu) + L-leucine + ATP = L-leucyl-tRNA(Leu) + AMP + diphosphate. This chain is Leucine--tRNA ligase, found in Corynebacterium diphtheriae (strain ATCC 700971 / NCTC 13129 / Biotype gravis).